A 390-amino-acid chain; its full sequence is tRNA(Met) cytidine acetate ligase (390 aa).

ATP-binding positions include Val-7 to His-20, Gly-101, Asn-162, and Arg-187.

Belongs to the TmcAL family.

The protein localises to the cytoplasm. The catalysed reaction is cytidine(34) in elongator tRNA(Met) + acetate + ATP = N(4)-acetylcytidine(34) in elongator tRNA(Met) + AMP + diphosphate. In terms of biological role, catalyzes the formation of N(4)-acetylcytidine (ac(4)C) at the wobble position of elongator tRNA(Met), using acetate and ATP as substrates. First activates an acetate ion to form acetyladenylate (Ac-AMP) and then transfers the acetyl group to tRNA to form ac(4)C34. This chain is tRNA(Met) cytidine acetate ligase, found in Listeria monocytogenes serovar 1/2a (strain ATCC BAA-679 / EGD-e).